Here is a 287-residue protein sequence, read N- to C-terminus: NAD kinase (287 aa).

Asp-70 serves as the catalytic Proton acceptor. NAD(+) contacts are provided by residues 70-71, 144-145, Arg-155, Lys-172, Asp-174, 185-190, and Gln-244; these read DG, ND, and TAYSLS.

It belongs to the NAD kinase family. A divalent metal cation is required as a cofactor.

The protein resides in the cytoplasm. The catalysed reaction is NAD(+) + ATP = ADP + NADP(+) + H(+). Its function is as follows. Involved in the regulation of the intracellular balance of NAD and NADP, and is a key enzyme in the biosynthesis of NADP. Catalyzes specifically the phosphorylation on 2'-hydroxyl of the adenosine moiety of NAD to yield NADP. The sequence is that of NAD kinase from Solibacter usitatus (strain Ellin6076).